We begin with the raw amino-acid sequence, 633 residues long: Kinesin-like motor protein 9 (633 aa).

Positions 1–392 constitute a Kinesin motor domain; sequence MIQIFLRVKK…MRYSANAREI (392 aa). 94 to 101 lines the ATP pocket; sequence GVSGAGKT. Disordered regions lie at residues 393 to 423, 531 to 556, and 575 to 633; these read LPPP…TKAL, LEEE…SRKL, and KLWP…INEL. Positions 398-423 are enriched in polar residues; it reads NENSGSQSPSHSLLQKSKNTSSTKAL. A coiled-coil region spans residues 417-541; sequence TSSTKALTSH…EEESIKESSA (125 aa). A compositionally biased stretch (polar residues) spans 578 to 587; the sequence is PQSTLIQAPN. A compositionally biased stretch (low complexity) spans 604 to 623; that stretch reads VSPIKPLSPSRRPPLTSLYS. 3 positions are modified to phosphoserine: S605, S611, and S613. Over residues 624–633 the composition is skewed to polar residues; the sequence is GTTDIDINEL.

This sequence belongs to the TRAFAC class myosin-kinesin ATPase superfamily. Kinesin family. As to quaternary structure, interacts with ase1. Post-translationally, phosphorylated by cdc2 and dephosphorylated by clp1. Dephosphorylation is required for the interaction with ase1.

The protein localises to the nucleus. It localises to the cytoplasm. The protein resides in the cytoskeleton. Its subcellular location is the microtubule organizing center. It is found in the spindle pole body. Functionally, kinesin-like motor protein involved in anaphase B spindle elongation. This Schizosaccharomyces pombe (strain 972 / ATCC 24843) (Fission yeast) protein is Kinesin-like motor protein 9 (klp9).